Reading from the N-terminus, the 73-residue chain is Ferredoxin-thioredoxin reductase, variable chain (73 aa).

Residues 43 to 46 are interaction with ferredoxin; it reads NGKP.

This sequence belongs to the ferredoxin thioredoxin reductase alpha subunit family. Heterodimer of subunit A (variable subunit) and subunit B (catalytic subunit). Heterodimeric FTR forms a complex with ferredoxin and thioredoxin.

In terms of biological role, variable subunit of the ferredoxin-thioredoxin reductase (FTR), which catalyzes the two-electron reduction of thioredoxins by the electrons provided by reduced ferredoxin. In Synechococcus sp. (strain ATCC 27144 / PCC 6301 / SAUG 1402/1) (Anacystis nidulans), this protein is Ferredoxin-thioredoxin reductase, variable chain (ftrV).